The primary structure comprises 318 residues: Ribosomal protein L11 methyltransferase (318 aa).

Residues Thr-159, Gly-180, Asp-202, and Asn-253 each coordinate S-adenosyl-L-methionine.

It belongs to the methyltransferase superfamily. PrmA family.

It is found in the cytoplasm. It catalyses the reaction L-lysyl-[protein] + 3 S-adenosyl-L-methionine = N(6),N(6),N(6)-trimethyl-L-lysyl-[protein] + 3 S-adenosyl-L-homocysteine + 3 H(+). Functionally, methylates ribosomal protein L11. The sequence is that of Ribosomal protein L11 methyltransferase from Lachnospira eligens (strain ATCC 27750 / DSM 3376 / VPI C15-48 / C15-B4) (Eubacterium eligens).